The chain runs to 256 residues: Transcription factor bHLH131 (256 aa).

Residues 91-140 enclose the bHLH domain; the sequence is VAAKKHSDAERRRRLRINSQFATLRTILPNLVKQDKASVLGETVRYFNEL.

In terms of assembly, homodimer.

Its subcellular location is the nucleus. In Arabidopsis thaliana (Mouse-ear cress), this protein is Transcription factor bHLH131 (BHLH131).